The primary structure comprises 433 residues: Schlafen-like protein 2 (433 aa).

A B30.2/SPRY domain is found at 1–168 (MADTSPRESK…LSVNFGSQPF (168 aa)). Positions 199–400 (EHVVVKLPFA…RRMASNKCVY (202 aa)) are SLFN-like fold. Catalysis depends on residues E211 and E216.

This sequence belongs to the Schlafen family. In terms of assembly, component of the trimeric PUCH (precursor of 21U RNA 5'-end cleavage holoenzyme) complex; consisting of tofu-1, tofu-2 and either slfl-3 or slfl-4. Within the complex, interacts (via N-terminus) with tofu-1 (via N-terminus); the interaction stabilizes tofu-2 and may form a functional nuclease. Within the complex, interacts (via N-terminus) with slfl-3 (via N-terminus); the presence of tofu-1 is required for this interaction. The cofactor is Mg(2+). Expressed in the germline.

Its subcellular location is the cytoplasm. It is found in the mitochondrion. Inhibited by ethylenediaminetetraacetic acid (EDTA). Component of the trimeric PUCH (precursor of 21U RNA 5'-end cleavage holoenzyme) complex, that acts as an endoribonuclease processing the 5'-end of precursor Piwi-interacting RNAs (piRNAs). The PUCH complex consists of tofu-1, tofu-2 and either slfl-3 or slfl-4, with tofu-2 exhibiting endoribonuclease activity. PUCH-mediated processing strictly requires a 7-methyl-G cap (m7 G-cap) and an uracil at position three (U3). PUCH also exhibits a strict bias for piRNA precursors with an A or G at position 1. Mature piRNA production is enhanced by the interaction of PUCH with the PETISCO complex, which is stabilizing piRNA precursors and allows their processing by PUCH. The chain is Schlafen-like protein 2 from Caenorhabditis elegans.